We begin with the raw amino-acid sequence, 345 residues long: High mobility group protein 20A (345 aa).

Disordered stretches follow at residues 1–130 (MEST…PFPE) and 166–206 (QKYQ…EKES). 2 stretches are compositionally biased toward polar residues: residues 22 to 38 (NNQPPFCGTTVSGSSQA) and 57 to 67 (LHQSGEQQLGN). Residues 80–94 (ARRGGWNKGRKRKRS) show a composition bias toward basic residues. Positions 101–169 (PKAPLTGYVR…RYTKELQKYQ (69 aa)) form a DNA-binding region, HMG box. Residues 112-125 (MNERREQLRTERPD) show a composition bias toward basic and acidic residues. Residues 167–178 (KYQNTDAYQTYS) are compositionally biased toward polar residues. Residues 179–189 (RKAKSRQKGRQ) are compositionally biased toward basic residues. Residues 227 to 285 (SKAREAELRQLRKSNMEFEERNAALQKHVESMRSAVQRLEAELSQEHERNSLLQQHLQS) are a coiled coil.

It localises to the nucleus. Its function is as follows. Plays a role in neuronal differentiation. The sequence is that of High mobility group protein 20A (hmg20a) from Xenopus laevis (African clawed frog).